A 301-amino-acid polypeptide reads, in one-letter code: Homoserine O-acetyltransferase (301 aa).

The Acyl-thioester intermediate role is filled by Cys-142. Substrate is bound by residues Lys-163 and Ser-192. His-235 functions as the Proton acceptor in the catalytic mechanism. Glu-237 is a catalytic residue. Residue Arg-249 coordinates substrate.

This sequence belongs to the MetA family.

It localises to the cytoplasm. The enzyme catalyses L-homoserine + acetyl-CoA = O-acetyl-L-homoserine + CoA. It functions in the pathway amino-acid biosynthesis; L-methionine biosynthesis via de novo pathway; O-acetyl-L-homoserine from L-homoserine: step 1/1. Transfers an acetyl group from acetyl-CoA to L-homoserine, forming acetyl-L-homoserine. This chain is Homoserine O-acetyltransferase, found in Bacillus cereus (strain B4264).